The primary structure comprises 240 residues: Ubiquinone biosynthesis O-methyltransferase (240 aa).

Arginine 44, glycine 64, aspartate 85, and methionine 129 together coordinate S-adenosyl-L-methionine.

This sequence belongs to the methyltransferase superfamily. UbiG/COQ3 family.

It carries out the reaction a 3-demethylubiquinol + S-adenosyl-L-methionine = a ubiquinol + S-adenosyl-L-homocysteine + H(+). The enzyme catalyses a 3-(all-trans-polyprenyl)benzene-1,2-diol + S-adenosyl-L-methionine = a 2-methoxy-6-(all-trans-polyprenyl)phenol + S-adenosyl-L-homocysteine + H(+). It functions in the pathway cofactor biosynthesis; ubiquinone biosynthesis. Functionally, O-methyltransferase that catalyzes the 2 O-methylation steps in the ubiquinone biosynthetic pathway. This Escherichia coli O157:H7 protein is Ubiquinone biosynthesis O-methyltransferase.